Here is a 72-residue protein sequence, read N- to C-terminus: Large ribosomal subunit protein bL31 (72 aa).

Belongs to the bacterial ribosomal protein bL31 family. Type A subfamily. In terms of assembly, part of the 50S ribosomal subunit.

Binds the 23S rRNA. This is Large ribosomal subunit protein bL31 from Deinococcus geothermalis (strain DSM 11300 / CIP 105573 / AG-3a).